The sequence spans 113 residues: UPF0482 protein KPK_2871 (113 aa).

The signal sequence occupies residues 1-28 (MNMTLNKRWCLTAILALSAVVYTSSSFA). Residues 38 to 61 (GDSAQSRQQASMEKEQWNDTRSLR) are disordered. The span at 39–48 (DSAQSRQQAS) shows a compositional bias: polar residues. Over residues 49–59 (MEKEQWNDTRS) the composition is skewed to basic and acidic residues.

It belongs to the UPF0482 family.

The protein is UPF0482 protein KPK_2871 of Klebsiella pneumoniae (strain 342).